The following is a 187-amino-acid chain: ATP synthase subunit b 2 (187 aa).

Over residues M1–D12 the composition is skewed to basic and acidic residues. The segment at M1–P31 is disordered. A helical membrane pass occupies residues L40–L60.

It belongs to the ATPase B chain family. As to quaternary structure, F-type ATPases have 2 components, F(1) - the catalytic core - and F(0) - the membrane proton channel. F(1) has five subunits: alpha(3), beta(3), gamma(1), delta(1), epsilon(1). F(0) has three main subunits: a(1), b(2) and c(10-14). The alpha and beta chains form an alternating ring which encloses part of the gamma chain. F(1) is attached to F(0) by a central stalk formed by the gamma and epsilon chains, while a peripheral stalk is formed by the delta and b chains.

Its subcellular location is the cell inner membrane. Functionally, f(1)F(0) ATP synthase produces ATP from ADP in the presence of a proton or sodium gradient. F-type ATPases consist of two structural domains, F(1) containing the extramembraneous catalytic core and F(0) containing the membrane proton channel, linked together by a central stalk and a peripheral stalk. During catalysis, ATP synthesis in the catalytic domain of F(1) is coupled via a rotary mechanism of the central stalk subunits to proton translocation. Component of the F(0) channel, it forms part of the peripheral stalk, linking F(1) to F(0). The b'-subunit is a diverged and duplicated form of b found in plants and photosynthetic bacteria. The sequence is that of ATP synthase subunit b 2 (atpF2) from Beijerinckia indica subsp. indica (strain ATCC 9039 / DSM 1715 / NCIMB 8712).